The chain runs to 313 residues: HTH-type transcriptional regulator CysB (313 aa).

Residues 1 to 59 (MNLHQFRFVREAVRQNFNLTEAAKALYTSQPGVSKAIIELEDELGVEIFTRHGKRVRSL) enclose the HTH lysR-type domain. The H-T-H motif DNA-binding region spans 19-38 (LTEAAKALYTSQPGVSKAII).

Belongs to the LysR transcriptional regulatory family.

Its function is as follows. Transcriptional regulator preferentially involved in the control of sulfate transport and reduction. Binds to DNA at target promoter regions. In Burkholderia cenocepacia (strain ATCC BAA-245 / DSM 16553 / LMG 16656 / NCTC 13227 / J2315 / CF5610) (Burkholderia cepacia (strain J2315)), this protein is HTH-type transcriptional regulator CysB.